A 157-amino-acid polypeptide reads, in one-letter code: Endoribonuclease YbeY (157 aa).

3 residues coordinate Zn(2+): histidine 114, histidine 118, and histidine 124.

Belongs to the endoribonuclease YbeY family. The cofactor is Zn(2+).

The protein resides in the cytoplasm. Functionally, single strand-specific metallo-endoribonuclease involved in late-stage 70S ribosome quality control and in maturation of the 3' terminus of the 16S rRNA. This is Endoribonuclease YbeY from Klebsiella pneumoniae (strain 342).